The following is a 153-amino-acid chain: UPF0179 protein AF_2154 (153 aa).

The protein belongs to the UPF0179 family.

The polypeptide is UPF0179 protein AF_2154 (Archaeoglobus fulgidus (strain ATCC 49558 / DSM 4304 / JCM 9628 / NBRC 100126 / VC-16)).